We begin with the raw amino-acid sequence, 220 residues long: Glutathione S-transferase (220 aa).

The 77-residue stretch at 1–77 folds into the GST N-terminal domain; it reads MLKLHGFSVS…YIEQTQSGKA (77 aa). Glutathione-binding positions include Tyr-12, Val-49, and 61–62; that span reads ET. The region spanning 82–211 is the GST C-terminal domain; that stretch reads DPFEQAKVRE…ADKEASMPAF (130 aa).

The protein belongs to the GST superfamily. As to quaternary structure, monomer and homodimer.

Its subcellular location is the cytoplasm. The catalysed reaction is RX + glutathione = an S-substituted glutathione + a halide anion + H(+). Functionally, conjugation of reduced glutathione to a wide number of exogenous and endogenous hydrophobic electrophiles. The polypeptide is Glutathione S-transferase (Pseudomonas putida (strain ATCC 700007 / DSM 6899 / JCM 31910 / BCRC 17059 / LMG 24140 / F1)).